Consider the following 1728-residue polypeptide: Hybrid PKS-NRPS synthetase TAS1 (1728 aa).

Residues Ser153–Val499 form a condensation (C) domain region. The segment at Lys608–Asn1002 is adenylation (A) domain. Residues Met1141 to Val1219 enclose the Carrier domain. At Ser1177 the chain carries O-(pantetheine 4'-phosphoryl)serine. A disordered region spans residues Leu1225–Val1256. 2 stretches are compositionally biased toward low complexity: residues Gly1226–Ser1237 and Glu1244–Ser1255. Residues Arg1262–Thr1714 form the Ketosynthase family 3 (KS3) domain. Active-site for beta-ketoacyl synthase activity residues include Cys1436, His1579, and Asn1633.

It in the N-terminal section; belongs to the NRP synthetase family. The cofactor is pantetheine 4'-phosphate.

It carries out the reaction acetoacetyl-CoA + L-isoleucine + ATP = tenuazonic acid + AMP + diphosphate + CoA + 2 H(+). In terms of biological role, hybrid PKS-NRPS synthetase that mediates the biosynthesis of the toxin tenuazonic acid (TeA), an inhibitor of protein biosynthesis on ribosomes by suppressing the release of new protein. TAS1 alone is sufficient for TeA synthesis via the condensation of isoleucine (Ile) with acetoacetyl-CoA by the N-terminal NRPS module and subsequent cyclization conducted by the C-terminal KS domain. In Pyricularia oryzae (strain 70-15 / ATCC MYA-4617 / FGSC 8958) (Rice blast fungus), this protein is Hybrid PKS-NRPS synthetase TAS1.